The following is a 489-amino-acid chain: Glutamyl-tRNA(Gln) amidotransferase subunit A (489 aa).

Active-site charge relay system residues include Lys77 and Ser152. Residue Ser176 is the Acyl-ester intermediate of the active site.

The protein belongs to the amidase family. GatA subfamily. As to quaternary structure, heterotrimer of A, B and C subunits.

The catalysed reaction is L-glutamyl-tRNA(Gln) + L-glutamine + ATP + H2O = L-glutaminyl-tRNA(Gln) + L-glutamate + ADP + phosphate + H(+). In terms of biological role, allows the formation of correctly charged Gln-tRNA(Gln) through the transamidation of misacylated Glu-tRNA(Gln) in organisms which lack glutaminyl-tRNA synthetase. The reaction takes place in the presence of glutamine and ATP through an activated gamma-phospho-Glu-tRNA(Gln). The polypeptide is Glutamyl-tRNA(Gln) amidotransferase subunit A (Protochlamydia amoebophila (strain UWE25)).